The chain runs to 415 residues: MTISTLLLSPNRRLLTCLSRVPSPWLLHSSHPAPGPPGALPNCFGHHCTKRVLLSDGFRRTLCVQATLKDHTEGLSDKEQRFVDRLYTGLVKGQRACLAEAITLVESTHTRKRELAQVLLQRVLALQREQELRNQGKPLTFRVGLSGPPGAGKSTFIECFGKMLTEQGHRLSVLAVDPSSCTSGGSLLGDKTRMIELSRDMNAYIRPSPTSGTLGGVTRTTNEAIVLCEGGGYDIILIETVGVGQSEFAVADMVDMFVLLLPPAGGDELQGIKRGIIEMADLVVITKSDGDLIVPARRIQAEYVSALKLLRRRSEVWRPKVIRISARSGEGITEMWDTMREFQHQMLASGELAAKRQTQHKVWMWNLIQENVLEHFKTHPSIREQIPLMERKVLSGALSPGRAADLLLKAFKSRH.

Residues 1–62 constitute a mitochondrion transit peptide; the sequence is MTISTLLLSP…LLSDGFRRTL (62 aa). GTP contacts are provided by residues 147-155, D289, and 325-327; these read GPPGAGKST and SAR.

It belongs to the SIMIBI class G3E GTPase family. ArgK/MeaB subfamily. As to quaternary structure, homodimer. Interacts with MMUT (the apoenzyme form); the interaction is GTP dependent.

It is found in the mitochondrion. Its subcellular location is the cytoplasm. The enzyme catalyses GTP + H2O = GDP + phosphate + H(+). GTPase activity is stimulated by MMUT. Its function is as follows. GTPase, binds and hydrolyzes GTP. Involved in intracellular vitamin B12 metabolism, mediates the transport of cobalamin (Cbl) into mitochondria for the final steps of adenosylcobalamin (AdoCbl) synthesis. Functions as a G-protein chaperone that assists AdoCbl cofactor delivery from MMAB to the methylmalonyl-CoA mutase (MMUT). Plays a dual role as both a protectase and a reactivase for MMUT. Protects MMUT from progressive inactivation by oxidation by decreasing the rate of the formation of the oxidized inactive cofactor hydroxocobalamin (OH2Cbl). Additionally acts a reactivase by promoting the replacement of OH2Cbl by the active cofactor AdoCbl, restoring the activity of MMUT in the presence and hydrolysis of GTP. The sequence is that of Methylmalonic aciduria type A homolog, mitochondrial from Mus musculus (Mouse).